A 356-amino-acid polypeptide reads, in one-letter code: tRNA N6-adenosine threonylcarbamoyltransferase (356 aa).

The Fe cation site is built by H115 and H119. Residues 138 to 142, D171, G184, and N283 contribute to the substrate site; that span reads LVSGG. D311 is a binding site for Fe cation.

This sequence belongs to the KAE1 / TsaD family. Fe(2+) serves as cofactor.

Its subcellular location is the cytoplasm. The enzyme catalyses L-threonylcarbamoyladenylate + adenosine(37) in tRNA = N(6)-L-threonylcarbamoyladenosine(37) in tRNA + AMP + H(+). Required for the formation of a threonylcarbamoyl group on adenosine at position 37 (t(6)A37) in tRNAs that read codons beginning with adenine. Is involved in the transfer of the threonylcarbamoyl moiety of threonylcarbamoyl-AMP (TC-AMP) to the N6 group of A37, together with TsaE and TsaB. TsaD likely plays a direct catalytic role in this reaction. The chain is tRNA N6-adenosine threonylcarbamoyltransferase from Prochlorococcus marinus (strain MIT 9313).